We begin with the raw amino-acid sequence, 472 residues long: Protein translocase subunit SecD (472 aa).

Transmembrane regions (helical) follow at residues 8-28 (ILFT…PLSG), 300-320 (TIIN…IIFY), 325-347 (VIAD…WTGA), 353-375 (GIAG…YERI), 396-416 (VFST…VLFF), and 424-444 (GFAV…LVVS).

Belongs to the SecD/SecF family. SecD subfamily. In terms of assembly, forms a complex with SecF. Part of the essential Sec protein translocation apparatus which comprises SecA, SecYEG and auxiliary proteins SecDF. Other proteins may also be involved.

Its subcellular location is the cell inner membrane. Part of the Sec protein translocase complex. Interacts with the SecYEG preprotein conducting channel. SecDF uses the proton motive force (PMF) to complete protein translocation after the ATP-dependent function of SecA. The polypeptide is Protein translocase subunit SecD (Petrotoga mobilis (strain DSM 10674 / SJ95)).